The sequence spans 464 residues: E3 ubiquitin-protein ligase RNF38 (464 aa).

Positions 1-94 are disordered; the sequence is MRESEDSPSP…NSISQDENYH (94 aa). Residues 6-20 carry the Bipartite nuclear localization signal 1 motif; the sequence is DSPSPKRQRLSHSVF. Positions 38–53 are enriched in polar residues; the sequence is MTSNRQPPSVRPNQHH. The short motif at 64–79 is the Bipartite nuclear localization signal 2 element; sequence RNRRSPPVRRQRGRRE. Positions 64–83 are enriched in basic residues; it reads RNRRSPPVRRQRGRRERLSR. The RING-type zinc finger occupies 412–453; the sequence is CVVCMCDFESRQLLRVLPCNHEFHAKCVDKWLKGNRTCPICR.

The protein localises to the nucleus. It catalyses the reaction S-ubiquitinyl-[E2 ubiquitin-conjugating enzyme]-L-cysteine + [acceptor protein]-L-lysine = [E2 ubiquitin-conjugating enzyme]-L-cysteine + N(6)-ubiquitinyl-[acceptor protein]-L-lysine.. It participates in protein modification; protein ubiquitination. Functionally, acts as an E3 ubiquitin-protein ligase able to ubiquitinate p53/TP53 which promotes its relocalization to discrete foci associated with PML nuclear bodies. Exhibits preference for UBE2D2 as a E2 enzyme. The protein is E3 ubiquitin-protein ligase RNF38 of Mus musculus (Mouse).